The sequence spans 468 residues: 5-carboxymethyl-2-hydroxymuconate semialdehyde dehydrogenase (468 aa).

The active site involves Glu244. The Nucleophile role is filled by Cys278.

It belongs to the aldehyde dehydrogenase family. In terms of assembly, homodimer.

It catalyses the reaction 2-hydroxy-5-carboxymethylmuconate semialdehyde + NAD(+) + H2O = (2E,4Z)-5-hydroxypenta-2,4-diene-1,2,5-tricarboxylate + NADH + 2 H(+). It participates in aromatic compound metabolism; 4-hydroxyphenylacetate degradation; pyruvate and succinate semialdehyde from 4-hydroxyphenylacetate: step 3/7. Functionally, catalyzes the conversion of 5-carboxymethyl-2-hydroxy-muconic semialdehyde (CHMS) into 5-carboxymethyl-2-hydroxy-muconic acid (CHM or (2E,4Z)-5-hydroxypenta-2,4-diene-1,2,5-tricarboxylate). Is involved in a meta-cleavage pathway for the catabolism of 4-hydroxyphenylacetate (4-HPA) via homoprotocatechuate (HPC or 3,4-dihydroxyphenylacetate). This Escherichia coli protein is 5-carboxymethyl-2-hydroxymuconate semialdehyde dehydrogenase.